The sequence spans 318 residues: 2,4-dinitroanisole O-demethylase subunit beta (318 aa).

This sequence belongs to the metallo-beta-lactamase superfamily. As to quaternary structure, part of the complex DnhAB composed of the 2,4-dinitroanisole O-demethylase alpha (DnhA) and beta (DnhB) subunits.

It carries out the reaction 2,4-dinitroanisole + H2O = 2,4-dinitrophenol + methanol + H(+). Involved in the degradation of 2,4-dinitroanisole (DNAN), an insensitive munition ingredient used in explosive formulations as a replacement for 2,4,6-trinitrotoluene (TNT). Catalyzes the removal of the methyl group from 2,4-dinitroanisole (DNAN) to yield 2,4-dinitrophenol (2,4-DNP) and methanol. This Nocardioides sp. (strain JS1661) protein is 2,4-dinitroanisole O-demethylase subunit beta.